The following is a 120-amino-acid chain: NAD(P)H-quinone oxidoreductase subunit 3, chloroplastic (120 aa).

3 helical membrane-spanning segments follow: residues 10–30 (FWAFLLIASLVPVLAVGTSSL), 64–84 (MFALVFVVFDVETVFLYPWAM), and 89–109 (LGVLAFIEALVFVLVLIIGLV).

The protein belongs to the complex I subunit 3 family. As to quaternary structure, NDH is composed of at least 16 different subunits, 5 of which are encoded in the nucleus.

The protein resides in the plastid. Its subcellular location is the chloroplast thylakoid membrane. It carries out the reaction a plastoquinone + NADH + (n+1) H(+)(in) = a plastoquinol + NAD(+) + n H(+)(out). The catalysed reaction is a plastoquinone + NADPH + (n+1) H(+)(in) = a plastoquinol + NADP(+) + n H(+)(out). Its function is as follows. NDH shuttles electrons from NAD(P)H:plastoquinone, via FMN and iron-sulfur (Fe-S) centers, to quinones in the photosynthetic chain and possibly in a chloroplast respiratory chain. The immediate electron acceptor for the enzyme in this species is believed to be plastoquinone. Couples the redox reaction to proton translocation, and thus conserves the redox energy in a proton gradient. In Zygnema circumcarinatum (Green alga), this protein is NAD(P)H-quinone oxidoreductase subunit 3, chloroplastic.